The primary structure comprises 101 residues: Small ribosomal subunit protein uS14 (101 aa).

Belongs to the universal ribosomal protein uS14 family. As to quaternary structure, part of the 30S ribosomal subunit. Contacts proteins S3 and S10.

In terms of biological role, binds 16S rRNA, required for the assembly of 30S particles and may also be responsible for determining the conformation of the 16S rRNA at the A site. This is Small ribosomal subunit protein uS14 from Chlamydia pneumoniae (Chlamydophila pneumoniae).